The chain runs to 302 residues: Protein transport protein SEC13 homolog A (302 aa).

6 WD repeats span residues 9–48 (GHSD…GSQH), 54–95 (GHRG…QWTQ), 101–142 (DHKV…GWDT), 148–201 (AHPV…WKMD), 208–251 (KHTD…EQWE), and 257–296 (DFKT…EWEQ).

The protein belongs to the WD repeat SEC13 family. Interacts with MAG5, SEC31A and SEC31B.

It is found in the golgi apparatus. It localises to the endoplasmic reticulum. Functionally, required for protein transport from the endoplasmic reticulum to the Golgi apparatus. The sequence is that of Protein transport protein SEC13 homolog A from Arabidopsis thaliana (Mouse-ear cress).